Reading from the N-terminus, the 492-residue chain is uncharacterized protein (492 aa).

This sequence belongs to the FGGY kinase family.

This is an uncharacterized protein from Escherichia coli (strain K12).